Reading from the N-terminus, the 260-residue chain is UPF0246 protein BamMC406_2140 (260 aa).

Belongs to the UPF0246 family.

This chain is UPF0246 protein BamMC406_2140, found in Burkholderia ambifaria (strain MC40-6).